The primary structure comprises 131 residues: Ribosome-binding factor A (131 aa).

This sequence belongs to the RbfA family. Monomer. Binds 30S ribosomal subunits, but not 50S ribosomal subunits or 70S ribosomes.

It is found in the cytoplasm. Functionally, one of several proteins that assist in the late maturation steps of the functional core of the 30S ribosomal subunit. Associates with free 30S ribosomal subunits (but not with 30S subunits that are part of 70S ribosomes or polysomes). Required for efficient processing of 16S rRNA. May interact with the 5'-terminal helix region of 16S rRNA. This is Ribosome-binding factor A from Thermotoga petrophila (strain ATCC BAA-488 / DSM 13995 / JCM 10881 / RKU-1).